The primary structure comprises 700 residues: Glutamine synthetase (700 aa).

In terms of domain architecture, GS beta-grasp spans 65–155 (YHFTPPGSSP…LPTAFCSYGG (91 aa)). One can recognise a GS catalytic domain in the interval 159–589 (DRDSLLRSME…TMQEMIRKDL (431 aa)). The Mg(2+) site is built by glutamate 196, glutamate 198, glutamate 267, and glutamate 274. Residues 318-319 (NG) and glycine 319 each bind L-glutamate. Histidine 323 is a Mg(2+) binding site. ATP is bound by residues serine 327 and arginine 435. Position 435 (arginine 435) interacts with L-glutamate. Glutamate 472 contacts Mg(2+).

It belongs to the glutamine synthetase family. As to quaternary structure, homohexamer. Mg(2+) is required as a cofactor.

The protein localises to the cytoplasm. The enzyme catalyses L-glutamate + NH4(+) + ATP = L-glutamine + ADP + phosphate + H(+). The activity of this enzyme is not controlled by adenylation. Its function is as follows. Catalyzes the ATP-dependent biosynthesis of glutamine from glutamate and ammonia. The chain is Glutamine synthetase from Butyrivibrio fibrisolvens.